We begin with the raw amino-acid sequence, 250 residues long: Probable fimbrial chaperone YfcS (250 aa).

The signal sequence occupies residues 1–28; that stretch reads MSDLLCSAKLGAMTLALLLSATSLSALA.

Belongs to the periplasmic pilus chaperone family.

The protein localises to the periplasm. Its function is as follows. Part of the yfcOPQRSUV fimbrial operon. Could contribute to adhesion to various surfaces in specific environmental niches. Increases adhesion to eukaryotic T24 bladder epithelial cells in the absence of fim genes. This is Probable fimbrial chaperone YfcS (yfcS) from Escherichia coli (strain K12).